The primary structure comprises 136 residues: Ribulose bisphosphate carboxylase small subunit, chloroplastic 1 (136 aa).

Residues 1–13 constitute a chloroplast transit peptide; the sequence is NTDITSNGERVKC.

It belongs to the RuBisCO small chain family. Heterohexadecamer of 8 large and 8 small subunits.

The protein resides in the plastid. It is found in the chloroplast. RuBisCO catalyzes two reactions: the carboxylation of D-ribulose 1,5-bisphosphate, the primary event in carbon dioxide fixation, as well as the oxidative fragmentation of the pentose substrate. Both reactions occur simultaneously and in competition at the same active site. Although the small subunit is not catalytic it is essential for maximal activity. The polypeptide is Ribulose bisphosphate carboxylase small subunit, chloroplastic 1 (Pisum sativum (Garden pea)).